A 553-amino-acid polypeptide reads, in one-letter code: Dihydroxy-acid dehydratase (553 aa).

Mg(2+) is bound at residue aspartate 78. Cysteine 119 contacts [2Fe-2S] cluster. The Mg(2+) site is built by aspartate 120 and lysine 121. An N6-carboxylysine modification is found at lysine 121. Cysteine 193 is a binding site for [2Fe-2S] cluster. Glutamate 441 contributes to the Mg(2+) binding site. The active-site Proton acceptor is the serine 467.

This sequence belongs to the IlvD/Edd family. In terms of assembly, homodimer. [2Fe-2S] cluster serves as cofactor. Mg(2+) is required as a cofactor.

It carries out the reaction (2R)-2,3-dihydroxy-3-methylbutanoate = 3-methyl-2-oxobutanoate + H2O. The catalysed reaction is (2R,3R)-2,3-dihydroxy-3-methylpentanoate = (S)-3-methyl-2-oxopentanoate + H2O. It participates in amino-acid biosynthesis; L-isoleucine biosynthesis; L-isoleucine from 2-oxobutanoate: step 3/4. Its pathway is amino-acid biosynthesis; L-valine biosynthesis; L-valine from pyruvate: step 3/4. Functions in the biosynthesis of branched-chain amino acids. Catalyzes the dehydration of (2R,3R)-2,3-dihydroxy-3-methylpentanoate (2,3-dihydroxy-3-methylvalerate) into 2-oxo-3-methylpentanoate (2-oxo-3-methylvalerate) and of (2R)-2,3-dihydroxy-3-methylbutanoate (2,3-dihydroxyisovalerate) into 2-oxo-3-methylbutanoate (2-oxoisovalerate), the penultimate precursor to L-isoleucine and L-valine, respectively. The chain is Dihydroxy-acid dehydratase from Citrifermentans bemidjiense (strain ATCC BAA-1014 / DSM 16622 / JCM 12645 / Bem) (Geobacter bemidjiensis).